Here is a 173-residue protein sequence, read N- to C-terminus: Large ribosomal subunit protein uL16 (173 aa).

The protein belongs to the universal ribosomal protein uL16 family.

The polypeptide is Large ribosomal subunit protein uL16 (Methanosphaerula palustris (strain ATCC BAA-1556 / DSM 19958 / E1-9c)).